Here is a 670-residue protein sequence, read N- to C-terminus: DNA ligase (670 aa).

Residues 34–38, 84–85, 116–119, R139, E174, Y226, K291, and K315 each bind NAD(+); these read DAEYD, SL, and EHKV. Catalysis depends on K118, which acts as the N6-AMP-lysine intermediate. Positions 409, 412, 425, and 430 each coordinate Zn(2+). Residues 586–670 enclose the BRCT domain; the sequence is EVSDLLSGLT…LKEKGAPVPA (85 aa).

Belongs to the NAD-dependent DNA ligase family. LigA subfamily. It depends on Mg(2+) as a cofactor.

The catalysed reaction is NAD(+) + (deoxyribonucleotide)n-3'-hydroxyl + 5'-phospho-(deoxyribonucleotide)m = (deoxyribonucleotide)n+m + AMP + beta-nicotinamide D-nucleotide.. DNA ligase that catalyzes the formation of phosphodiester linkages between 5'-phosphoryl and 3'-hydroxyl groups in double-stranded DNA using NAD as a coenzyme and as the energy source for the reaction. It is essential for DNA replication and repair of damaged DNA. This Thermus filiformis protein is DNA ligase.